Consider the following 295-residue polypeptide: Ethanolamine ammonia-lyase small subunit (295 aa).

The adenosylcob(III)alamin site is built by Val-208 and Glu-229.

The protein belongs to the EutC family. As to quaternary structure, the basic unit is a heterodimer which dimerizes to form tetramers. The heterotetramers trimerize; 6 large subunits form a core ring with 6 small subunits projecting outwards. The cofactor is adenosylcob(III)alamin.

The protein resides in the bacterial microcompartment. It catalyses the reaction ethanolamine = acetaldehyde + NH4(+). It functions in the pathway amine and polyamine degradation; ethanolamine degradation. In terms of biological role, catalyzes the deamination of various vicinal amino-alcohols to oxo compounds. Allows this organism to utilize ethanolamine as the sole source of nitrogen and carbon in the presence of external vitamin B12. The sequence is that of Ethanolamine ammonia-lyase small subunit from Fusobacterium nucleatum subsp. nucleatum (strain ATCC 25586 / DSM 15643 / BCRC 10681 / CIP 101130 / JCM 8532 / KCTC 2640 / LMG 13131 / VPI 4355).